Here is a 192-residue protein sequence, read N- to C-terminus: dTTP/UTP pyrophosphatase (192 aa).

Asp-70 functions as the Proton acceptor in the catalytic mechanism.

The protein belongs to the Maf family. YhdE subfamily. The cofactor is a divalent metal cation.

It localises to the cytoplasm. It catalyses the reaction dTTP + H2O = dTMP + diphosphate + H(+). The catalysed reaction is UTP + H2O = UMP + diphosphate + H(+). Functionally, nucleoside triphosphate pyrophosphatase that hydrolyzes dTTP and UTP. May have a dual role in cell division arrest and in preventing the incorporation of modified nucleotides into cellular nucleic acids. In Alkaliphilus oremlandii (strain OhILAs) (Clostridium oremlandii (strain OhILAs)), this protein is dTTP/UTP pyrophosphatase.